The sequence spans 399 residues: Phosphate acyltransferase (399 aa).

The protein belongs to the PlsX family. As to quaternary structure, homodimer. Probably interacts with PlsY.

The protein resides in the cytoplasm. The enzyme catalyses a fatty acyl-[ACP] + phosphate = an acyl phosphate + holo-[ACP]. It functions in the pathway lipid metabolism; phospholipid metabolism. Its function is as follows. Catalyzes the reversible formation of acyl-phosphate (acyl-PO(4)) from acyl-[acyl-carrier-protein] (acyl-ACP). This enzyme utilizes acyl-ACP as fatty acyl donor, but not acyl-CoA. This chain is Phosphate acyltransferase, found in Rhodobacter capsulatus (Rhodopseudomonas capsulata).